The primary structure comprises 1023 residues: uncharacterized protein (1023 aa).

The interval methionine 1–alanine 35 is disordered. Lysine 17 carries the post-translational modification N6-acetyllysine. Phosphoserine occurs at positions 206 and 383. 5 disordered regions span residues glycine 381 to aspartate 501, proline 518 to serine 551, proline 703 to histidine 742, glutamate 907 to alanine 980, and lysine 1002 to leucine 1023. Threonine 389 carries the phosphothreonine modification. Polar residues predominate over residues proline 391 to proline 400. 3 stretches are compositionally biased toward basic and acidic residues: residues arginine 425–glutamate 436, cysteine 443–glutamate 454, and cysteine 477–arginine 490. 2 positions are modified to phosphoserine: serine 493 and serine 494. A compositionally biased stretch (pro residues) spans alanine 706–glycine 722. Serine 912, serine 964, and serine 972 each carry phosphoserine. Residues proline 963–serine 972 show a composition bias toward low complexity.

This is an uncharacterized protein from Mus musculus (Mouse).